Here is a 537-residue protein sequence, read N- to C-terminus: MAKFVFVTGGVVSSLGKGITAASLGRLLKSRGLKVAIQKLDPYINVDPGTMSPYQHGEVFVTEDGAETDLDLGHYERFIDINISRSCNVTTGGIYAAVINKERRGEYLGGTVQVIPHITNEIKERVLSVADDSLADVVITEIGGTVGDIESQPFLEAIRQLKGDLGRGNVVYIHVTLVPYLRAANELKTKPTQHSVKELRSMGIKPDIIVCRSELPLSKEMEEKLALFCDVEKEAVIQALDAPSIYEVPLMLEEEGLADIVLDKLGIKTGPPDLADWREMVERMKNLRYLTTIALVGKYVSLQDAYLSVAEALRHAGFYHGSAIEIKWINSEEVNCANTEDLLGSADGILVPGGFGDRGIEGKIEAIRFARERGIPFFGLCLGMQLAVVEFSRNVIGWRGANSTEFDPYTPYPVIDLLPEQRQLSDKGGTMRLGSYPCKLVPGTLAYRAYKKEIVEERHRHRYELNNAYRADLAAKGLVFSGTLPDGYLVEIIELPGHPWFLATQFHPEFKSRPNRPHPLFRDFIGAARKYKESRYS.

The tract at residues 1-267 is amidoligase domain; that stretch reads MAKFVFVTGG…ADIVLDKLGI (267 aa). CTP is bound at residue Ser-13. Ser-13 is a binding site for UTP. Residue 14 to 19 coordinates ATP; sequence SLGKGI. Tyr-54 contacts L-glutamine. An ATP-binding site is contributed by Asp-71. 2 residues coordinate Mg(2+): Asp-71 and Glu-141. CTP-binding positions include 148–150, 188–193, and Lys-224; these read DIE and KTKPTQ. Residues 188–193 and Lys-224 each bind UTP; that span reads KTKPTQ. The region spanning 292 to 534 is the Glutamine amidotransferase type-1 domain; the sequence is TIALVGKYVS…IGAARKYKES (243 aa). Gly-354 is a binding site for L-glutamine. Cys-381 (nucleophile; for glutamine hydrolysis) is an active-site residue. Residues 382 to 385, Glu-405, and Arg-462 contribute to the L-glutamine site; that span reads LGMQ. Catalysis depends on residues His-507 and Glu-509.

It belongs to the CTP synthase family. Homotetramer.

It catalyses the reaction UTP + L-glutamine + ATP + H2O = CTP + L-glutamate + ADP + phosphate + 2 H(+). It carries out the reaction L-glutamine + H2O = L-glutamate + NH4(+). The catalysed reaction is UTP + NH4(+) + ATP = CTP + ADP + phosphate + 2 H(+). The protein operates within pyrimidine metabolism; CTP biosynthesis via de novo pathway; CTP from UDP: step 2/2. Allosterically activated by GTP, when glutamine is the substrate; GTP has no effect on the reaction when ammonia is the substrate. The allosteric effector GTP functions by stabilizing the protein conformation that binds the tetrahedral intermediate(s) formed during glutamine hydrolysis. Inhibited by the product CTP, via allosteric rather than competitive inhibition. Catalyzes the ATP-dependent amination of UTP to CTP with either L-glutamine or ammonia as the source of nitrogen. Regulates intracellular CTP levels through interactions with the four ribonucleotide triphosphates. The sequence is that of CTP synthase from Pelotomaculum thermopropionicum (strain DSM 13744 / JCM 10971 / SI).